The following is a 249-amino-acid chain: Type III pantothenate kinase (249 aa).

6 to 13 (DCGNSFIK) is an ATP binding site. Substrate contacts are provided by residues tyrosine 93 and 100–103 (GLDR). Aspartate 102 acts as the Proton acceptor in catalysis. Aspartate 122 contacts K(+). Threonine 125 lines the ATP pocket. Residue threonine 181 participates in substrate binding.

This sequence belongs to the type III pantothenate kinase family. In terms of assembly, homodimer. The cofactor is NH4(+). K(+) serves as cofactor.

It localises to the cytoplasm. It catalyses the reaction (R)-pantothenate + ATP = (R)-4'-phosphopantothenate + ADP + H(+). It functions in the pathway cofactor biosynthesis; coenzyme A biosynthesis; CoA from (R)-pantothenate: step 1/5. Its function is as follows. Catalyzes the phosphorylation of pantothenate (Pan), the first step in CoA biosynthesis. The chain is Type III pantothenate kinase from Pseudomonas fluorescens (strain SBW25).